The following is a 517-amino-acid chain: Acetylcholine receptor subunit delta (517 aa).

An N-terminal signal peptide occupies residues 1-21 (MEGPVLTLGLLAALAVCGSWG). Over 22 to 245 (LNEEERLIRH…ITFYLIIRRK (224 aa)) the chain is Extracellular. N-linked (GlcNAc...) asparagine glycosylation is found at asparagine 97 and asparagine 164. Residues cysteine 151 and cysteine 165 are joined by a disulfide bond. 3 helical membrane passes run 246–270 (PLFY…VFYL), 278–299 (TSVA…SKRL), and 312–333 (FLLF…VLNI). Over 334–471 (HFRTPSTHVL…WNRVARTVDR (138 aa)) the chain is Cytoplasmic. Phosphotyrosine; by Tyr-kinases is present on tyrosine 390. Residues 472 to 490 (LCLFVVTPVMVVGTAWIFL) form a helical membrane-spanning segment.

It belongs to the ligand-gated ion channel (TC 1.A.9) family. Acetylcholine receptor (TC 1.A.9.1) subfamily. Delta/CHRND sub-subfamily. In terms of assembly, pentamer of two alpha chains, and one each of the beta, delta, and gamma (in immature muscle) or epsilon (in mature muscle) chains. The muscle heteropentamer composed of alpha-1, beta-1, delta, epsilon subunits interacts with the alpha-conotoxin ImII.

It localises to the postsynaptic cell membrane. The protein resides in the cell membrane. It catalyses the reaction K(+)(in) = K(+)(out). It carries out the reaction Na(+)(in) = Na(+)(out). Its function is as follows. After binding acetylcholine, the AChR responds by an extensive change in conformation that affects all subunits and leads to opening of an ion-conducting channel across the plasma membrane. This Homo sapiens (Human) protein is Acetylcholine receptor subunit delta.